An 820-amino-acid chain; its full sequence is Probable ATP-dependent RNA helicase DDX23 (820 aa).

The span at 1–42 (MAGELADKKDRDASPSKEERKRSRTPDRERDRDRDRKSSPSK) shows a compositional bias: basic and acidic residues. The disordered stretch occupies residues 1–244 (MAGELADKKD…QKIREEKDKS (244 aa)). Ser14 and Ser16 each carry phosphoserine. Residues 43–65 (DRKRHRSRDRRRGGSRSRSRSRS) show a composition bias toward basic residues. Positions 66–105 (KSAERERRHKERERDKERDRNKKDRDRDKDGHRRDKDRKR) are enriched in basic and acidic residues. Ser107 and Ser109 each carry phosphoserine. 3 stretches are compositionally biased toward basic and acidic residues: residues 112-137 (RGKD…DKKP), 147-226 (LLAK…RETN), and 233-244 (GRQKIREEKDKS). The Q motif signature appears at 391–419 (RSWKDSSLPPHILEVIDKCGYKEPTPIQR). Residues 422 to 627 (IPIGLQNRDI…RSYLRRPAVV (206 aa)) form the Helicase ATP-binding domain. 435–442 (AETGSGKT) is an ATP binding site. The DEAD box motif lies at 549–552 (DEAD). One can recognise a Helicase C-terminal domain in the interval 651-799 (KRKKLLAILE…SCPPELANHP (149 aa)). Glycyl lysine isopeptide (Lys-Gly) (interchain with G-Cter in SUMO2) cross-links involve residues Lys686 and Lys811.

The protein belongs to the DEAD box helicase family. DDX23/PRP28 subfamily. In terms of assembly, the phosphorylated form (by SRPK2) is a component of the U4/U6-U5 tri-snRNP complex composed of the U4, U6 and U5 snRNAs and at least PRPF3, PRPF4, PRPF6, PRPF8, PRPF31, SNRNP200, TXNL4A, WDR57, SNRNP40, DDX23, CD2BP2, PPIH, SNU13, EFTUD2, SART1 and USP39. Identified in the spliceosome C complex. Interacts with ERBB4. Interacts with ERCC6. In terms of processing, in vitro phosphorylated by CLK1 and U1 snRNP-associated protein kinase. Phosphorylated by SRPK2 and this phosphorylation is required for its association with the tri-snRNP (U4/U6-U5 tri-small nuclear ribonucleoproteins) and subsequent spliceosomal B complex formation. May be phosphorylated by SRPK2 on Ser residues in the SR domain; the phosphorylation is required for the removal of inappropriate R-loops during transcription.

The protein resides in the nucleus. Its subcellular location is the chromosome. The enzyme catalyses ATP + H2O = ADP + phosphate + H(+). Involved in pre-mRNA splicing and its phosphorylated form (by SRPK2) is required for spliceosomal B complex formation. Independently of its spliceosome formation function, required for the suppression of incorrect R-loops formed during transcription; R-loops are composed of a DNA:RNA hybrid and the associated non-template single-stranded DNA. The polypeptide is Probable ATP-dependent RNA helicase DDX23 (Pongo abelii (Sumatran orangutan)).